The chain runs to 287 residues: Orotidine 5'-phosphate decarboxylase (287 aa).

Residue Lys-97 is the Proton donor of the active site.

It belongs to the OMP decarboxylase family. Type 2 subfamily.

It carries out the reaction orotidine 5'-phosphate + H(+) = UMP + CO2. Its pathway is pyrimidine metabolism; UMP biosynthesis via de novo pathway; UMP from orotate: step 2/2. This chain is Orotidine 5'-phosphate decarboxylase, found in Clostridium perfringens (strain SM101 / Type A).